Here is a 328-residue protein sequence, read N- to C-terminus: Putative gluconeogenesis factor (328 aa).

The protein belongs to the gluconeogenesis factor family.

The protein localises to the cytoplasm. In terms of biological role, required for morphogenesis under gluconeogenic growth conditions. The protein is Putative gluconeogenesis factor of Aquifex aeolicus (strain VF5).